The following is a 200-amino-acid chain: Somatotropin (200 aa).

The first 22 residues, 1–22, serve as a signal peptide directing secretion; sequence MARVLVLLSVVVASLLFSQGAT. His-38 is a binding site for Zn(2+). Cys-71 and Cys-173 form a disulfide bridge. Position 182 (Glu-182) interacts with Zn(2+). The cysteines at positions 190 and 198 are disulfide-linked.

The protein belongs to the somatotropin/prolactin family.

The protein localises to the secreted. In terms of biological role, growth hormone plays an important role in growth control and is involved in the regulation of several anabolic processes. Implicated as an osmoregulatory substance important for seawater adaptation. This Ictalurus punctatus (Channel catfish) protein is Somatotropin (gh).